The sequence spans 327 residues: Eukaryotic translation initiation factor 3 subunit I (327 aa).

WD repeat units lie at residues 8-49 (GHER…GSYD), 51-89 (HNGA…CIYT), 188-227 (VHRY…KLKQ), 229-268 (KSER…GHFE), and 285-324 (GHFG…LGFT).

The protein belongs to the eIF-3 subunit I family. As to quaternary structure, component of the eukaryotic translation initiation factor 3 (eIF-3) complex.

It is found in the cytoplasm. Its function is as follows. Component of the eukaryotic translation initiation factor 3 (eIF-3) complex, which is involved in protein synthesis of a specialized repertoire of mRNAs and, together with other initiation factors, stimulates binding of mRNA and methionyl-tRNAi to the 40S ribosome. The eIF-3 complex specifically targets and initiates translation of a subset of mRNAs involved in cell proliferation. This chain is Eukaryotic translation initiation factor 3 subunit I, found in Caenorhabditis briggsae.